The primary structure comprises 977 residues: Kinesin-like protein KIN-7L, chloroplastic (977 aa).

Residues 1 to 12 (MGSKQVSKTRNG) show a composition bias toward polar residues. Residues 1–66 (MGSKQVSKTR…PPKPLQSKEN (66 aa)) are disordered. 2 stretches are compositionally biased toward low complexity: residues 22–31 (SSASSTTSSS) and 38–54 (SVDSHSSPTSSSVRSKP). The region spanning 66–385 (NVTVTVRFRP…LKFAHRAKHI (320 aa)) is the Kinesin motor domain. 146-153 (GVTSSGKT) lines the ATP pocket. Residues 386-471 (EIQAAQNKII…LTKLILVSNK (86 aa)) adopt a coiled-coil conformation. The tract at residues 549-589 (DSSLGGSSLSDKSSAVKSNSTPSTPQGEGSDFHTESRLSEG) is disordered. Over residues 551 to 561 (SLGGSSLSDKS) the composition is skewed to low complexity. Positions 563–575 (AVKSNSTPSTPQG) are enriched in polar residues. 2 coiled-coil regions span residues 626 to 688 (MEIL…GKQI) and 732 to 942 (IQEQ…LENE). Positions 864–876 (SSVTTPQGKTGNL) are enriched in polar residues. Disordered regions lie at residues 864 to 891 (SSVTTPQGKTGNLRNGRRESVSKRKEQE) and 958 to 977 (AANSGLSDSVSETRIEHFGT). Over residues 879–891 (GRRESVSKRKEQE) the composition is skewed to basic and acidic residues. Positions 958–967 (AANSGLSDSV) are enriched in polar residues. A compositionally biased stretch (basic and acidic residues) spans 968 to 977 (SETRIEHFGT).

The protein belongs to the TRAFAC class myosin-kinesin ATPase superfamily. Kinesin family. KIN-7 subfamily.

It is found in the plastid. The protein resides in the chloroplast. The protein is Kinesin-like protein KIN-7L, chloroplastic of Arabidopsis thaliana (Mouse-ear cress).